We begin with the raw amino-acid sequence, 228 residues long: MTKLVLIRHGQSVWNQQDLFTGWTDVELTEQGVAEAKAAGEKLLAAGYDFDACHTSVLKRAIKTLNLVLETMDRLWLPVQKDWRLNERHYGGLQGLNKTQTAAQHGKEQVHIWRRSYDIPPPPLPEGDERLPDGDRRYKGLSKEQLPRTESLKDCVARVLPYWHESIAPQIRAGQRVLISAHGNSLRGLVMYLSGLSEEEITGFEIPTGRPLVYELDDALKPTDRFFL.

Substrate is bound by residues 8 to 15 (RHGQSVWN), 21 to 22 (TG), R60, 87 to 90 (ERHY), K98, 114 to 115 (RR), and 183 to 184 (GN). H9 functions as the Tele-phosphohistidine intermediate in the catalytic mechanism. E87 serves as the catalytic Proton donor/acceptor.

Belongs to the phosphoglycerate mutase family. BPG-dependent PGAM subfamily. As to quaternary structure, homodimer.

The enzyme catalyses (2R)-2-phosphoglycerate = (2R)-3-phosphoglycerate. The protein operates within carbohydrate degradation; glycolysis; pyruvate from D-glyceraldehyde 3-phosphate: step 3/5. Its function is as follows. Catalyzes the interconversion of 2-phosphoglycerate and 3-phosphoglycerate. This is 2,3-bisphosphoglycerate-dependent phosphoglycerate mutase from Rhodospirillum centenum (strain ATCC 51521 / SW).